A 433-amino-acid polypeptide reads, in one-letter code: Peptidoglycan DD-endopeptidase ShyC (433 aa).

A helical membrane pass occupies residues 10–30; sequence WLHRVLITAFSAIIVFAIFFL. Residues His299, Asp303, and His380 each coordinate Zn(2+).

This sequence belongs to the peptidase M23B family. Zn(2+) is required as a cofactor.

It is found in the cell inner membrane. It functions in the pathway cell wall degradation; peptidoglycan degradation. Reduced activity in 0.5 mM EDTA and a complete loss of activity at higher EDTA concentrations. In terms of biological role, cell wall peptidoglycan (PG) DD-endopeptidase. Hydrolyzes peptide cross-links which covalently connect adjacent PG strands probably to allow insertion of new glycans and thus cell wall expansion. Degrades purified whole PG sacculi in vitro. The sequence is that of Peptidoglycan DD-endopeptidase ShyC from Vibrio cholerae serotype O1 (strain ATCC 39315 / El Tor Inaba N16961).